Consider the following 306-residue polypeptide: D-alanine--D-alanine ligase (306 aa).

In terms of domain architecture, ATP-grasp spans 102 to 300; sequence KIIAASAGVS…YGDIVKWIVE (199 aa). 128 to 183 provides a ligand contact to ATP; it reads PMKPPYVIKPIREGSSFGVVIVGSDETMPLHDIMNNEWVYDDEIMVEKYVPGRELT. Mg(2+)-binding residues include aspartate 253, glutamate 267, and asparagine 269.

This sequence belongs to the D-alanine--D-alanine ligase family. Requires Mg(2+) as cofactor. It depends on Mn(2+) as a cofactor.

The protein resides in the cytoplasm. The catalysed reaction is 2 D-alanine + ATP = D-alanyl-D-alanine + ADP + phosphate + H(+). Its pathway is cell wall biogenesis; peptidoglycan biosynthesis. Functionally, cell wall formation. The chain is D-alanine--D-alanine ligase from Bartonella bacilliformis (strain ATCC 35685 / KC583 / Herrer 020/F12,63).